The primary structure comprises 495 residues: UDP-glycosyltransferase 73C5 (495 aa).

The helical transmembrane segment at 146–162 (ILFHGMGCFCLLCMHVL) threads the bilayer. UDP-alpha-D-glucose is bound by residues S296, 356–358 (SPQ), 373–381 (HCGWNSTLE), and 395–398 (FADQ). The interval 446 to 477 (MGESDDAKERRRRAKELGDSAHKAVEEGGSSH) is disordered. Residues 450-471 (DDAKERRRRAKELGDSAHKAVE) are compositionally biased toward basic and acidic residues.

This sequence belongs to the UDP-glycosyltransferase family. Elongating hypocotyls and root-specific. Expressed in the vascular system, in meristematic tissues of the root tip, and in the vasculature of the hypocotyl right after germination. In late stage of flower development, expressed in petals, and in abscission zones.

The protein resides in the membrane. Its function is as follows. Specifically catalyzes 23-O-glucosylation of brassinosteroids, resulting probably in their inactivation. Also, involved in the O-glucosylation of trans-zeatin and dihydrozeatin. Active in vitro on cis-zeatin, dihydrozeatin-9-N-Glc, and olomoucine. Also involved in the detoxification of the Fusarium mycotoxin deoxynivalenol by the transfer of glucose from UDP-glucose to the hydroxyl group at C-3. Possesses low quercetin 7-O-glucosyltransferase and 4'-O-glucosyltransferase activities in vitro. This Arabidopsis thaliana (Mouse-ear cress) protein is UDP-glycosyltransferase 73C5 (UGT73C5).